The following is a 421-amino-acid chain: PDZ and LIM domain protein 7 (421 aa).

One can recognise a PDZ domain in the interval 1-85 (MEEYKVTLDG…KLGLVLSRFA (85 aa)). The tract at residues 115-193 (IARPFGSGTP…STGPAVRPPW (79 aa)) is disordered. Residues 147–172 (YPSSQMPQGQLQNGQKSRTVSNVSGK) show a composition bias toward polar residues. 3 consecutive LIM zinc-binding domains span residues 244–302 (PVCS…ARFA), 303–362 (PNCA…MFGT), and 363–421 (KCRG…FSNV).

The protein resides in the cytoplasm. It is found in the cytoskeleton. May function as a scaffold on which the coordinated assembly of proteins can occur. May play a role as an adapter that, via its PDZ domain, localizes LIM-binding proteins to actin filaments of both skeletal muscle and nonmuscle tissues. The sequence is that of PDZ and LIM domain protein 7 (pdlim7) from Xenopus laevis (African clawed frog).